The chain runs to 216 residues: MRTGILGGTFNPIHHAHLRIAEEVRDAFALDQVIFIPAASPPHKPMEGEIPFEVRCEMVRLATADNPSFAVSDLEGRRTGKSYSIDTLRELRRERPGDEFFFIIGSDSFLDFGSWHEYEAIFSSCNIVAVERPGAVIRDLAAAIPVAVAPQFCYHAAEKRLAHRSGYSVYYLAGIPLDISSSAIRRLARLGRSIRYLVPEPVAHYITEQRIYTHDR.

This sequence belongs to the NadD family.

It catalyses the reaction nicotinate beta-D-ribonucleotide + ATP + H(+) = deamido-NAD(+) + diphosphate. Its pathway is cofactor biosynthesis; NAD(+) biosynthesis; deamido-NAD(+) from nicotinate D-ribonucleotide: step 1/1. Catalyzes the reversible adenylation of nicotinate mononucleotide (NaMN) to nicotinic acid adenine dinucleotide (NaAD). The protein is Probable nicotinate-nucleotide adenylyltransferase of Geobacter metallireducens (strain ATCC 53774 / DSM 7210 / GS-15).